The chain runs to 135 residues: ATP synthase epsilon chain (135 aa).

Belongs to the ATPase epsilon chain family. In terms of assembly, F-type ATPases have 2 components, CF(1) - the catalytic core - and CF(0) - the membrane proton channel. CF(1) has five subunits: alpha(3), beta(3), gamma(1), delta(1), epsilon(1). CF(0) has three main subunits: a, b and c.

The protein resides in the cell inner membrane. Produces ATP from ADP in the presence of a proton gradient across the membrane. The protein is ATP synthase epsilon chain of Desulforapulum autotrophicum (strain ATCC 43914 / DSM 3382 / VKM B-1955 / HRM2) (Desulfobacterium autotrophicum).